A 143-amino-acid polypeptide reads, in one-letter code: Putative pre-16S rRNA nuclease (143 aa).

It belongs to the YqgF nuclease family.

It localises to the cytoplasm. Its function is as follows. Could be a nuclease involved in processing of the 5'-end of pre-16S rRNA. This chain is Putative pre-16S rRNA nuclease, found in Lactobacillus gasseri (strain ATCC 33323 / DSM 20243 / BCRC 14619 / CIP 102991 / JCM 1131 / KCTC 3163 / NCIMB 11718 / NCTC 13722 / AM63).